The following is a 397-amino-acid chain: Phosphoglycerate kinase (397 aa).

Residues 21–23, R37, 60–63, R119, and R152 contribute to the substrate site; these read DFN and HLGR. ATP-binding positions include K203, G294, E325, and 354-357; that span reads GGDS.

It belongs to the phosphoglycerate kinase family. As to quaternary structure, monomer.

The protein localises to the cytoplasm. The enzyme catalyses (2R)-3-phosphoglycerate + ATP = (2R)-3-phospho-glyceroyl phosphate + ADP. The protein operates within carbohydrate degradation; glycolysis; pyruvate from D-glyceraldehyde 3-phosphate: step 2/5. This Pelodictyon phaeoclathratiforme (strain DSM 5477 / BU-1) protein is Phosphoglycerate kinase.